A 214-amino-acid polypeptide reads, in one-letter code: Large ribosomal subunit protein uL3 (214 aa).

The residue at position 155 (Gln-155) is an N5-methylglutamine.

This sequence belongs to the universal ribosomal protein uL3 family. In terms of assembly, part of the 50S ribosomal subunit. Forms a cluster with proteins L14 and L19. Methylated by PrmB.

In terms of biological role, one of the primary rRNA binding proteins, it binds directly near the 3'-end of the 23S rRNA, where it nucleates assembly of the 50S subunit. The polypeptide is Large ribosomal subunit protein uL3 (Acinetobacter baumannii (strain ACICU)).